Here is a 414-residue protein sequence, read N- to C-terminus: Esterase FrsA (414 aa).

It belongs to the FrsA family.

The enzyme catalyses a carboxylic ester + H2O = an alcohol + a carboxylate + H(+). In terms of biological role, catalyzes the hydrolysis of esters. This is Esterase FrsA from Citrobacter koseri (strain ATCC BAA-895 / CDC 4225-83 / SGSC4696).